We begin with the raw amino-acid sequence, 210 residues long: Leucyl/phenylalanyl-tRNA--protein transferase (210 aa).

Belongs to the L/F-transferase family.

Its subcellular location is the cytoplasm. The catalysed reaction is N-terminal L-lysyl-[protein] + L-leucyl-tRNA(Leu) = N-terminal L-leucyl-L-lysyl-[protein] + tRNA(Leu) + H(+). The enzyme catalyses N-terminal L-arginyl-[protein] + L-leucyl-tRNA(Leu) = N-terminal L-leucyl-L-arginyl-[protein] + tRNA(Leu) + H(+). It catalyses the reaction L-phenylalanyl-tRNA(Phe) + an N-terminal L-alpha-aminoacyl-[protein] = an N-terminal L-phenylalanyl-L-alpha-aminoacyl-[protein] + tRNA(Phe). In terms of biological role, functions in the N-end rule pathway of protein degradation where it conjugates Leu, Phe and, less efficiently, Met from aminoacyl-tRNAs to the N-termini of proteins containing an N-terminal arginine or lysine. This Ruegeria pomeroyi (strain ATCC 700808 / DSM 15171 / DSS-3) (Silicibacter pomeroyi) protein is Leucyl/phenylalanyl-tRNA--protein transferase.